The primary structure comprises 102 residues: Small ribosomal subunit protein uS10 (102 aa).

Belongs to the universal ribosomal protein uS10 family. As to quaternary structure, part of the 30S ribosomal subunit.

Functionally, involved in the binding of tRNA to the ribosomes. In Oceanobacillus iheyensis (strain DSM 14371 / CIP 107618 / JCM 11309 / KCTC 3954 / HTE831), this protein is Small ribosomal subunit protein uS10.